The chain runs to 297 residues: Probable terminal-alkyne amino-acid exporter (297 aa).

9 helical membrane passes run Ala6–Val26, Gly32–Ala52, Leu65–Trp85, Ala95–Gly115, Ile123–Ala143, Trp150–Leu170, Val178–Val198, Thr212–Ala232, and Val249–Gly269. EamA domains are found at residues Ala6 to Ala137 and Trp150 to Asn281.

It belongs to the EamA transporter family.

Its subcellular location is the cell membrane. Its function is as follows. Probably involved in the export of terminal alkyne-containing amino acids, namely L-propargylglycine (Pra) and L-beta-ethynylserine, that are antibiotics synthesized by enzymes encoded in the same gene cluster. The polypeptide is Probable terminal-alkyne amino-acid exporter (Streptantibioticus cattleyicolor (strain ATCC 35852 / DSM 46488 / JCM 4925 / NBRC 14057 / NRRL 8057) (Streptomyces cattleya)).